A 336-amino-acid polypeptide reads, in one-letter code: NADH-quinone oxidoreductase subunit H (336 aa).

8 helical membrane-spanning segments follow: residues 17–37 (WFIIAAVLLLAVVLGFVTYAI), 85–105 (ALFTLAPILAYAPAFAVLAVM), 116–136 (LGIGLLYYIALSGITVLGVIT), 154–174 (AAQMISYEVPLVMSVVGIVLL), 190–210 (VWNIVPQFIGFAVFIIAAQAE), 247–267 (VYMFGMGALITILFFGGWLPI), 274–294 (IPGIVWFILKFSVYVFLQFWI), and 309–329 (FAWKVLLPVALFNILLTAVVV).

This sequence belongs to the complex I subunit 1 family. As to quaternary structure, NDH-1 is composed of 14 different subunits. Subunits NuoA, H, J, K, L, M, N constitute the membrane sector of the complex.

It localises to the cell membrane. It carries out the reaction a quinone + NADH + 5 H(+)(in) = a quinol + NAD(+) + 4 H(+)(out). In terms of biological role, NDH-1 shuttles electrons from NADH, via FMN and iron-sulfur (Fe-S) centers, to quinones in the respiratory chain. The immediate electron acceptor for the enzyme in this species is believed to be ubiquinone. Couples the redox reaction to proton translocation (for every two electrons transferred, four hydrogen ions are translocated across the cytoplasmic membrane), and thus conserves the redox energy in a proton gradient. This subunit may bind ubiquinone. The polypeptide is NADH-quinone oxidoreductase subunit H (Brevibacillus brevis (strain 47 / JCM 6285 / NBRC 100599)).